Consider the following 371-residue polypeptide: Chaperone protein DnaJ (371 aa).

The J domain maps to 5 to 69 (DYYEVLGLSK…QKRAQYDQFG (65 aa)). A CR-type zinc finger spans residues 133 to 215 (GKELNVEIPV…CHGSGKVRKR (83 aa)). Residues Cys146, Cys149, Cys163, Cys166, Cys189, Cys192, Cys203, and Cys206 each coordinate Zn(2+). 4 CXXCXGXG motif repeats span residues 146–153 (CDTCKGSG), 163–170 (CKHCSGSG), 189–196 (CGHCSGTG), and 203–210 (CTTCHGSG).

This sequence belongs to the DnaJ family. Homodimer. Zn(2+) serves as cofactor.

Its subcellular location is the cytoplasm. Its function is as follows. Participates actively in the response to hyperosmotic and heat shock by preventing the aggregation of stress-denatured proteins and by disaggregating proteins, also in an autonomous, DnaK-independent fashion. Unfolded proteins bind initially to DnaJ; upon interaction with the DnaJ-bound protein, DnaK hydrolyzes its bound ATP, resulting in the formation of a stable complex. GrpE releases ADP from DnaK; ATP binding to DnaK triggers the release of the substrate protein, thus completing the reaction cycle. Several rounds of ATP-dependent interactions between DnaJ, DnaK and GrpE are required for fully efficient folding. Also involved, together with DnaK and GrpE, in the DNA replication of plasmids through activation of initiation proteins. This chain is Chaperone protein DnaJ, found in Bacillus cereus (strain ATCC 10987 / NRS 248).